Reading from the N-terminus, the 669-residue chain is GTP-binding protein 1 (669 aa).

Residues 1-32 (MAAERSRSPVDSPVPASMFAPEPSSPGAARAA) are disordered. Phosphoserine is present on residues serine 6, serine 8, serine 12, serine 24, serine 25, serine 44, serine 47, and serine 69. The tr-type G domain maps to 158–389 (FLEVRVAVVG…LNLLSPRTSY (232 aa)). Positions 167 to 174 (GNVDAGKS) are G1. Position 167-174 (167-174 (GNVDAGKS)) interacts with GTP. The tract at residues 206–210 (GRTSS) is G2. The interval 252 to 255 (DLAG) is G3. GTP contacts are provided by residues 252 to 256 (DLAGH) and 308 to 311 (TKID). The tract at residues 308-311 (TKID) is G4. The segment at 366 to 368 (SNV) is G5. 2 stretches are compositionally biased toward polar residues: residues 573–595 (LLQT…QSTK) and 620–637 (DEAS…SGLQ). The interval 573–669 (LLQTTNNSPM…GACVTPASGC (97 aa)) is disordered. Serine 580 carries the phosphoserine modification. Positions 646–657 (GRRRGGQRHKVK) are enriched in basic residues.

Belongs to the TRAFAC class translation factor GTPase superfamily. Classic translation factor GTPase family. GTPBP1 subfamily. As to quaternary structure, interacts with EXOSC2/RRP4, EXOSC3/RRP40, EXOSC5/RRP46, HNRNPD, HNRNPR and SYNCRIP. Identified in a complex with HNRNPD, HNRNPL, HNRNPQ, HNRNPR, HNRNPU and AANAT mRNA, but does not bind mRNA by itself. Detected in pineal gland (at protein level).

The protein localises to the cytoplasm. Functionally, promotes degradation of target mRNA species. Plays a role in the regulation of circadian mRNA stability. Binds GTP and has GTPase activity. The sequence is that of GTP-binding protein 1 (Gtpbp1) from Rattus norvegicus (Rat).